Reading from the N-terminus, the 167-residue chain is Translationally-controlled tumor protein homolog (167 aa).

Residues 1-167 (MKLFTDIISN…WKDGLRETKI (167 aa)) enclose the TCTP domain.

Belongs to the TCTP family.

The protein resides in the cytoplasm. It localises to the cytoskeleton. Its function is as follows. Involved in protein synthesis. Involved in microtubule stabilization. The protein is Translationally-controlled tumor protein homolog of Mycosarcoma maydis (Corn smut fungus).